Consider the following 282-residue polypeptide: HTH-type transcriptional activator RhaR (282 aa).

One can recognise an HTH araC/xylS-type domain in the interval 179 to 277; the sequence is DKLITALANS…GMTPSQWRHL (99 aa). 2 DNA-binding regions (H-T-H motif) span residues 196–217 and 244–267; these read DAFCQQEQCSERVLRQQFRAQT and ISEISMQCGFEDSNYFSVVFTRET.

Binds DNA as a dimer.

It localises to the cytoplasm. Activates expression of the rhaSR operon in response to L-rhamnose. The chain is HTH-type transcriptional activator RhaR from Salmonella typhimurium (strain LT2 / SGSC1412 / ATCC 700720).